A 277-amino-acid chain; its full sequence is Ribosomal RNA small subunit methyltransferase A (277 aa).

S-adenosyl-L-methionine is bound by residues N24, L26, G51, E72, D96, and N123.

It belongs to the class I-like SAM-binding methyltransferase superfamily. rRNA adenine N(6)-methyltransferase family. RsmA subfamily.

Its subcellular location is the cytoplasm. The enzyme catalyses adenosine(1518)/adenosine(1519) in 16S rRNA + 4 S-adenosyl-L-methionine = N(6)-dimethyladenosine(1518)/N(6)-dimethyladenosine(1519) in 16S rRNA + 4 S-adenosyl-L-homocysteine + 4 H(+). Its function is as follows. Specifically dimethylates two adjacent adenosines (A1518 and A1519) in the loop of a conserved hairpin near the 3'-end of 16S rRNA in the 30S particle. May play a critical role in biogenesis of 30S subunits. The protein is Ribosomal RNA small subunit methyltransferase A of Ureaplasma parvum serovar 3 (strain ATCC 27815 / 27 / NCTC 11736).